The chain runs to 312 residues: Olfactory receptor 14C36 (312 aa).

Over 1–23 (MPNSTTVMEFLLMRFSDVWTLQI) the chain is Extracellular. N3 carries N-linked (GlcNAc...) asparagine glycosylation. The chain crosses the membrane as a helical span at residues 24-44 (LHSASFFMLYLVTLMGNILIV). At 45 to 52 (TVTTCDSS) the chain is on the cytoplasmic side. A helical membrane pass occupies residues 53–73 (LHMPMYFFLRNLSILDACYIS). At 74–97 (VTVPTSCVNSLLDSTTISKAGCVA) the chain is on the extracellular side. A disulfide bridge connects residues C95 and C187. A helical membrane pass occupies residues 98–118 (QVFLVVFFVYVELLFLTIMAH). Topologically, residues 119–137 (DRYVAVCQPLHYPVIVNSR) are cytoplasmic. Residues 138–158 (ICIQMTLASLLSGLVYAGMHT) traverse the membrane as a helical segment. Residues 159–194 (GSTFQLPFCRSNVIHQFFCDIPSLLKLSCSDTFSNE) lie on the Extracellular side of the membrane. The chain crosses the membrane as a helical span at residues 195–215 (VMIVVSALGVGGGCFIFIIRS). The Cytoplasmic segment spans residues 216–235 (YIHIFSTVLGFPRGADRTKA). A helical transmembrane segment spans residues 236-256 (FSTCIPHILVVSVFLSSCSSV). The Extracellular portion of the chain corresponds to 257-269 (YLRPPAIPAATQD). The chain crosses the membrane as a helical span at residues 270–290 (LILSGFYSIMPPLFNPIIYSL). The Cytoplasmic portion of the chain corresponds to 291-312 (RNKQIKVAIKKIMKRIFYSENV).

This sequence belongs to the G-protein coupled receptor 1 family.

It localises to the cell membrane. In terms of biological role, odorant receptor. The sequence is that of Olfactory receptor 14C36 (OR14C36) from Homo sapiens (Human).